The following is a 259-amino-acid chain: Pimeloyl-[acyl-carrier protein] methyl ester esterase (259 aa).

Residues 15–242 (HLVLLHGWGL…AAHAPFISHP (228 aa)) form the AB hydrolase-1 domain. Residues W22, 82–83 (SL), and 143–147 (FLALQ) each bind substrate. S82 acts as the Nucleophile in catalysis. Catalysis depends on residues D207 and H235. H235 lines the substrate pocket.

This sequence belongs to the AB hydrolase superfamily. Carboxylesterase BioH family. Monomer.

The protein resides in the cytoplasm. The enzyme catalyses 6-carboxyhexanoyl-[ACP] methyl ester + H2O = 6-carboxyhexanoyl-[ACP] + methanol + H(+). Its pathway is cofactor biosynthesis; biotin biosynthesis. The physiological role of BioH is to remove the methyl group introduced by BioC when the pimeloyl moiety is complete. It allows to synthesize pimeloyl-ACP via the fatty acid synthetic pathway through the hydrolysis of the ester bonds of pimeloyl-ACP esters. This is Pimeloyl-[acyl-carrier protein] methyl ester esterase from Cronobacter sakazakii (strain ATCC BAA-894) (Enterobacter sakazakii).